The following is a 252-amino-acid chain: MPFVVAIPARFSASRLPGKPLRLLGGRPLIHRVAERALSTGAREVWVATDDVRIAEAVASLDGVHVAMTANTHLSGSDRLAECARIAGWDPEVCVVNLQGDEPFAPAAGIRAVAALLHHSNADMATLATTIDKSEDLFNPNIVKLVCNTHGEALYFSRAPIPWNRDTFATTREPTPLGPWLRHIGLYACNAGFLQRFTTMQPGTLEQIESLEQLRVLEAGHRIAVRITPEHFPPGIDTPEDLAKAEKALEDV.

The protein belongs to the KdsB family.

The protein localises to the cytoplasm. It catalyses the reaction 3-deoxy-alpha-D-manno-oct-2-ulosonate + CTP = CMP-3-deoxy-beta-D-manno-octulosonate + diphosphate. The protein operates within nucleotide-sugar biosynthesis; CMP-3-deoxy-D-manno-octulosonate biosynthesis; CMP-3-deoxy-D-manno-octulosonate from 3-deoxy-D-manno-octulosonate and CTP: step 1/1. Its pathway is bacterial outer membrane biogenesis; lipopolysaccharide biosynthesis. Activates KDO (a required 8-carbon sugar) for incorporation into bacterial lipopolysaccharide in Gram-negative bacteria. This is 3-deoxy-manno-octulosonate cytidylyltransferase from Xylella fastidiosa (strain Temecula1 / ATCC 700964).